We begin with the raw amino-acid sequence, 201 residues long: Recombination protein RecR (201 aa).

Residues 57–72 (CKYCRTFTEQEQCTIC) form a C4-type zinc finger. One can recognise a Toprim domain in the interval 81-176 (GQICVVESPA…TASRIAHGVP (96 aa)).

This sequence belongs to the RecR family.

Its function is as follows. May play a role in DNA repair. It seems to be involved in an RecBC-independent recombinational process of DNA repair. It may act with RecF and RecO. The sequence is that of Recombination protein RecR from Photorhabdus laumondii subsp. laumondii (strain DSM 15139 / CIP 105565 / TT01) (Photorhabdus luminescens subsp. laumondii).